Consider the following 278-residue polypeptide: Orotidine 5'-phosphate decarboxylase (278 aa).

K95 functions as the Proton donor in the catalytic mechanism.

The protein belongs to the OMP decarboxylase family. Type 2 subfamily.

It carries out the reaction orotidine 5'-phosphate + H(+) = UMP + CO2. The protein operates within pyrimidine metabolism; UMP biosynthesis via de novo pathway; UMP from orotate: step 2/2. In Methylibium petroleiphilum (strain ATCC BAA-1232 / LMG 22953 / PM1), this protein is Orotidine 5'-phosphate decarboxylase.